Reading from the N-terminus, the 241-residue chain is 15,16-dihydrobiliverdin:ferredoxin oxidoreductase (241 aa).

This sequence belongs to the HY2 family.

The enzyme catalyses 15,16-dihydrobiliverdin + oxidized 2[4Fe-4S]-[ferredoxin] = biliverdin IXalpha + reduced 2[4Fe-4S]-[ferredoxin] + 2 H(+). Its function is as follows. Catalyzes the two-electron reduction of biliverdin IX-alpha at the C15 methine bridge. This is 15,16-dihydrobiliverdin:ferredoxin oxidoreductase (pebA) from Prochlorococcus marinus (strain SARG / CCMP1375 / SS120).